A 150-amino-acid chain; its full sequence is 3-hydroxyacyl-[acyl-carrier-protein] dehydratase FabZ (150 aa).

H54 is a catalytic residue.

This sequence belongs to the thioester dehydratase family. FabZ subfamily.

It localises to the cytoplasm. The catalysed reaction is a (3R)-hydroxyacyl-[ACP] = a (2E)-enoyl-[ACP] + H2O. Functionally, involved in unsaturated fatty acids biosynthesis. Catalyzes the dehydration of short chain beta-hydroxyacyl-ACPs and long chain saturated and unsaturated beta-hydroxyacyl-ACPs. The protein is 3-hydroxyacyl-[acyl-carrier-protein] dehydratase FabZ of Aliivibrio fischeri (strain ATCC 700601 / ES114) (Vibrio fischeri).